A 306-amino-acid polypeptide reads, in one-letter code: Pantothenate kinase (306 aa).

90-97 (GSVAVGKS) contributes to the ATP binding site.

This sequence belongs to the prokaryotic pantothenate kinase family.

Its subcellular location is the cytoplasm. It carries out the reaction (R)-pantothenate + ATP = (R)-4'-phosphopantothenate + ADP + H(+). The protein operates within cofactor biosynthesis; coenzyme A biosynthesis; CoA from (R)-pantothenate: step 1/5. The sequence is that of Pantothenate kinase from Listeria monocytogenes serotype 4a (strain HCC23).